The sequence spans 171 residues: 3-hydroxydecanoyl-[acyl-carrier-protein] dehydratase (171 aa).

The active site involves H70.

This sequence belongs to the thioester dehydratase family. FabA subfamily. In terms of assembly, homodimer.

The protein resides in the cytoplasm. It carries out the reaction a (3R)-hydroxyacyl-[ACP] = a (2E)-enoyl-[ACP] + H2O. It catalyses the reaction (3R)-hydroxydecanoyl-[ACP] = (2E)-decenoyl-[ACP] + H2O. The catalysed reaction is (2E)-decenoyl-[ACP] = (3Z)-decenoyl-[ACP]. Its pathway is lipid metabolism; fatty acid biosynthesis. Necessary for the introduction of cis unsaturation into fatty acids. Catalyzes the dehydration of (3R)-3-hydroxydecanoyl-ACP to E-(2)-decenoyl-ACP and then its isomerization to Z-(3)-decenoyl-ACP. Can catalyze the dehydratase reaction for beta-hydroxyacyl-ACPs with saturated chain lengths up to 16:0, being most active on intermediate chain length. The sequence is that of 3-hydroxydecanoyl-[acyl-carrier-protein] dehydratase from Xanthomonas axonopodis pv. citri (strain 306).